The following is a 356-amino-acid chain: Peptide chain release factor 1 (356 aa).

An N5-methylglutamine modification is found at Gln233.

This sequence belongs to the prokaryotic/mitochondrial release factor family. Methylated by PrmC. Methylation increases the termination efficiency of RF1.

The protein localises to the cytoplasm. Functionally, peptide chain release factor 1 directs the termination of translation in response to the peptide chain termination codons UAG and UAA. This is Peptide chain release factor 1 from Endomicrobium trichonymphae.